Consider the following 124-residue polypeptide: Small ribosomal subunit protein uS13 (124 aa).

The disordered stretch occupies residues 98–124 (VRGQRTRCNARTRKGPRKTVGAKRKEK).

This sequence belongs to the universal ribosomal protein uS13 family. Part of the 30S ribosomal subunit. Forms a loose heterodimer with protein S19. Forms two bridges to the 50S subunit in the 70S ribosome.

Functionally, located at the top of the head of the 30S subunit, it contacts several helices of the 16S rRNA. In the 70S ribosome it contacts the 23S rRNA (bridge B1a) and protein L5 of the 50S subunit (bridge B1b), connecting the 2 subunits; these bridges are implicated in subunit movement. Contacts the tRNAs in the A and P-sites. This is Small ribosomal subunit protein uS13 from Dictyoglomus turgidum (strain DSM 6724 / Z-1310).